A 390-amino-acid chain; its full sequence is 1-deoxy-D-xylulose 5-phosphate reductoisomerase (390 aa).

NADPH contacts are provided by Thr10, Gly11, Ser12, Val13, Gly38, Asn40, and Asn123. Lys124 contributes to the 1-deoxy-D-xylulose 5-phosphate binding site. Glu125 contributes to the NADPH binding site. A Mn(2+)-binding site is contributed by Asp149. Residues Ser150, Glu151, Ser175, and His198 each contribute to the 1-deoxy-D-xylulose 5-phosphate site. Residue Glu151 coordinates Mn(2+). Residue Gly204 participates in NADPH binding. Ser211, Asn216, Lys217, and Glu220 together coordinate 1-deoxy-D-xylulose 5-phosphate. Glu220 contributes to the Mn(2+) binding site.

This sequence belongs to the DXR family. Mg(2+) is required as a cofactor. Requires Mn(2+) as cofactor.

It catalyses the reaction 2-C-methyl-D-erythritol 4-phosphate + NADP(+) = 1-deoxy-D-xylulose 5-phosphate + NADPH + H(+). It functions in the pathway isoprenoid biosynthesis; isopentenyl diphosphate biosynthesis via DXP pathway; isopentenyl diphosphate from 1-deoxy-D-xylulose 5-phosphate: step 1/6. Functionally, catalyzes the NADPH-dependent rearrangement and reduction of 1-deoxy-D-xylulose-5-phosphate (DXP) to 2-C-methyl-D-erythritol 4-phosphate (MEP). The protein is 1-deoxy-D-xylulose 5-phosphate reductoisomerase of Paracoccus denitrificans (strain Pd 1222).